The primary structure comprises 308 residues: Transcription factor zip-2 (308 aa).

The span at 217 to 229 (QSSSSSTVETTIT) shows a compositional bias: polar residues. The tract at residues 217-277 (QSSSSSTVET…RESKEERERL (61 aa)) is disordered. Residues 242–305 (SSDYRHKRDK…EDYKRLVMMF (64 aa)) form the bZIP domain. Residues 246 to 276 (RHKRDKNNLASQKSRQKRQAKIRESKEERER) form a basic motif region. A compositionally biased stretch (basic and acidic residues) spans 266–277 (KIRESKEERERL). The segment at 277-291 (LEKRKVQLQAMVLTL) is leucine-zipper.

It belongs to the bZIP family. C/EBP subfamily. In terms of tissue distribution, expressed in the pharynx and throughout the intestine.

The protein resides in the nucleus. Its function is as follows. Transcription factor that binds to the promoter and the enhancer regions of target genes. May act together with the bZIP transcription factor, cebp-2. Involved in responding to mitochondrial damage. Plays a role in the delay of age-associated mitochondrial fragmentation and muscle decline. Has a protective role in response to infection by the Gram-negative bacterium P.aeruginosa. Required to prevent P.aeruginosa ToxA-mediated lethality. Required for the activation of several infection response genes including irg-1 and irg-2 following P.aeruginosa infection; target gene activation may involve effects of the bacterial toxin, ToxA, and perhaps other toxins. In Caenorhabditis elegans, this protein is Transcription factor zip-2.